We begin with the raw amino-acid sequence, 220 residues long: Deoxyribose-phosphate aldolase (220 aa).

The Proton donor/acceptor role is filled by Asp89. Residue Lys151 is the Schiff-base intermediate with acetaldehyde of the active site. Residue Lys180 is the Proton donor/acceptor of the active site.

It belongs to the DeoC/FbaB aldolase family. DeoC type 1 subfamily.

It is found in the cytoplasm. The enzyme catalyses 2-deoxy-D-ribose 5-phosphate = D-glyceraldehyde 3-phosphate + acetaldehyde. It participates in carbohydrate degradation; 2-deoxy-D-ribose 1-phosphate degradation; D-glyceraldehyde 3-phosphate and acetaldehyde from 2-deoxy-alpha-D-ribose 1-phosphate: step 2/2. Its function is as follows. Catalyzes a reversible aldol reaction between acetaldehyde and D-glyceraldehyde 3-phosphate to generate 2-deoxy-D-ribose 5-phosphate. This Lactococcus lactis subsp. lactis (strain IL1403) (Streptococcus lactis) protein is Deoxyribose-phosphate aldolase.